Here is a 106-residue protein sequence, read N- to C-terminus: Small ribosomal subunit protein uS10 (106 aa).

This sequence belongs to the universal ribosomal protein uS10 family. In terms of assembly, part of the 30S ribosomal subunit.

Involved in the binding of tRNA to the ribosomes. This is Small ribosomal subunit protein uS10 from Synechococcus sp. (strain CC9311).